We begin with the raw amino-acid sequence, 165 residues long: Cyclic pyranopterin monophosphate synthase (165 aa).

Residues 78–80 and 116–117 contribute to the substrate site; these read LCH and ME. Aspartate 131 is a catalytic residue.

The protein belongs to the MoaC family. As to quaternary structure, homohexamer; trimer of dimers.

The enzyme catalyses (8S)-3',8-cyclo-7,8-dihydroguanosine 5'-triphosphate = cyclic pyranopterin phosphate + diphosphate. Its pathway is cofactor biosynthesis; molybdopterin biosynthesis. Functionally, catalyzes the conversion of (8S)-3',8-cyclo-7,8-dihydroguanosine 5'-triphosphate to cyclic pyranopterin monophosphate (cPMP). This chain is Cyclic pyranopterin monophosphate synthase, found in Sinorhizobium fredii (strain NBRC 101917 / NGR234).